Here is a 106-residue protein sequence, read N- to C-terminus: Cytochrome c oxidase assembly protein COX16 homolog, mitochondrial (106 aa).

The Mitochondrial matrix portion of the chain corresponds to 1–15 (MIAPAVLRALRKNKT). Residues 16 to 33 (LRYGVPMLLLVVGGSFGL) form a helical membrane-spanning segment. Topologically, residues 34–106 (REFSQIRYDA…NPETLKPKTT (73 aa)) are mitochondrial intermembrane. The segment at 81–106 (IRGPRPWEDPQLLQGRNPETLKPKTT) is disordered.

It belongs to the COX16 family. In terms of assembly, associates with the MITRAC complex. Interacts with MT-CO2/COX; specifically interacts with newly synthesized MT-CO2/COX. Interacts with SCO1, SCO2 and COA6.

The protein resides in the mitochondrion inner membrane. In terms of biological role, required for the assembly of the mitochondrial respiratory chain complex IV (CIV), also known as cytochrome c oxidase. Promotes the insertion of copper into the active site of cytochrome c oxidase subunit II (MT-CO2/COX2). Interacts specifically with newly synthesized MT-CO2/COX and its copper center-forming metallochaperones SCO1, SCO2 and COA6. Probably facilitates MT-CO2/COX2 association with the MITRAC assembly intermediate containing MT-CO1/COX1, thereby participating in merging the MT-CO1/COX1 and MT-CO2/COX2 assembly lines. The protein is Cytochrome c oxidase assembly protein COX16 homolog, mitochondrial of Mus musculus (Mouse).